The following is a 342-amino-acid chain: S-adenosylmethionine:tRNA ribosyltransferase-isomerase (342 aa).

The protein belongs to the QueA family. In terms of assembly, monomer.

The protein resides in the cytoplasm. It carries out the reaction 7-aminomethyl-7-carbaguanosine(34) in tRNA + S-adenosyl-L-methionine = epoxyqueuosine(34) in tRNA + adenine + L-methionine + 2 H(+). It functions in the pathway tRNA modification; tRNA-queuosine biosynthesis. Functionally, transfers and isomerizes the ribose moiety from AdoMet to the 7-aminomethyl group of 7-deazaguanine (preQ1-tRNA) to give epoxyqueuosine (oQ-tRNA). In Streptococcus mutans serotype c (strain ATCC 700610 / UA159), this protein is S-adenosylmethionine:tRNA ribosyltransferase-isomerase.